A 159-amino-acid polypeptide reads, in one-letter code: Vesicle transport protein SFT2A (159 aa).

Residues 1-36 (MEKLRRVLSGQDDEEQGLTAQVLDASSLSFNTRLKW) are Cytoplasmic-facing. A Phosphoserine modification is found at serine 9. A helical transmembrane segment spans residues 37–57 (FVICFVAGIFFSFLGTGLLWL). The Lumenal segment spans residues 58-62 (PNGMK). The helical transmembrane segment at 63-83 (LFAVFYTLGNLAALASTCFLM) threads the bilayer. Topologically, residues 84–97 (GPVKQLKKMFETTR) are cytoplasmic. The helical transmembrane segment at 98–118 (LLATIIMLLCLVFTLCAALWW) threads the bilayer. Residues 119–122 (RKKG) lie on the Lumenal side of the membrane. A helical transmembrane segment spans residues 123 to 143 (LALLFCILQFLSMTWYSLSYI). Topologically, residues 144–159 (PYARDAVLKCCSSLLG) are cytoplasmic.

The protein belongs to the SFT2 family.

It localises to the membrane. May be involved in fusion of retrograde transport vesicles derived from an endocytic compartment with the Golgi complex. This chain is Vesicle transport protein SFT2A, found in Mus musculus (Mouse).